A 227-amino-acid chain; its full sequence is Fibrillarin-like rRNA/tRNA 2'-O-methyltransferase (227 aa).

Residues 82 to 83 (TT), 100 to 101 (EF), 125 to 126 (DA), and 145 to 148 (DVAQ) contribute to the S-adenosyl-L-methionine site.

This sequence belongs to the methyltransferase superfamily. Fibrillarin family. In terms of assembly, interacts with nop5. Component of box C/D small ribonucleoprotein (sRNP) particles that contain rpl7ae, FlpA and nop5, plus a guide RNA.

In terms of biological role, involved in pre-rRNA and tRNA processing. Utilizes the methyl donor S-adenosyl-L-methionine to catalyze the site-specific 2'-hydroxyl methylation of ribose moieties in rRNA and tRNA. Site specificity is provided by a guide RNA that base pairs with the substrate. Methylation occurs at a characteristic distance from the sequence involved in base pairing with the guide RNA. This chain is Fibrillarin-like rRNA/tRNA 2'-O-methyltransferase, found in Methanosarcina acetivorans (strain ATCC 35395 / DSM 2834 / JCM 12185 / C2A).